We begin with the raw amino-acid sequence, 1177 residues long: Tyrosine-protein kinase hopscotch (1177 aa).

A disordered region spans residues 1–41 (MALANGGEDRMDDSSSGRTSLADSASLTNSSLRSGTSSQSI). Residues 16–41 (SGRTSLADSASLTNSSLRSGTSSQSI) are compositionally biased toward polar residues. Serine 40 and serine 321 each carry phosphoserine. In terms of domain architecture, FERM spans 46 to 414 (GTIRVFNFTT…IYIRLSSKWM (369 aa)). Residues 433-539 (HCHGPIGGAY…YRIPASKYDK (107 aa)) enclose the SH2; atypical domain. 2 consecutive Protein kinase domains span residues 582-843 (YPDS…AEIL) and 892-1164 (YNME…HPTD). ATP is bound by residues 898 to 906 (IGRGHYGTV) and lysine 926. The active-site Proton acceptor is the aspartate 1014. A phosphotyrosine; by autocatalysis mark is found at tyrosine 1047 and tyrosine 1048. The segment at 1158–1177 (KVTHPTDGHQSPPNQPTDAE) is disordered.

It belongs to the protein kinase superfamily. Tyr protein kinase family. JAK subfamily. In terms of assembly, forms a complex with Hsp83 and piwi; probably Hop mediates the interaction between piwi and Hsp83.

The protein resides in the endomembrane system. It carries out the reaction L-tyrosyl-[protein] + ATP = O-phospho-L-tyrosyl-[protein] + ADP + H(+). Tyrosine kinase of the non-receptor type, phosphorylates the marelle protein. Required maternally for the establishment of the normal array of embryonic segments: involved in the control of pair-rule gene transcription in a stripe-specific manner. Together with Hsp83 and piwi, mediates canalization, also known as developmental robustness, likely via epigenetic silencing of existing genetic variants and suppression of transposon-induced new genetic variation. This Drosophila melanogaster (Fruit fly) protein is Tyrosine-protein kinase hopscotch (hop).